The sequence spans 488 residues: Palmitoleoyl-protein carboxylesterase notum1' (488 aa).

An N-terminal signal peptide occupies residues 1–19 (MAGTLCVTLLLLLSTIAVG). N90 carries N-linked (GlcNAc...) asparagine glycosylation. Residues S226, D334, and H383 each act as charge relay system in the active site.

This sequence belongs to the pectinacetylesterase family. Notum subfamily. Expressed in the egg and through cleavage to gastrulation stages. Enriched in the animal (prospective ectoderm) and dorsal regions in early gastrula. Shows a dynamic expression during embryogenesis, in particular during neural induction and antero-posterior (AP) patterning.

It is found in the secreted. The catalysed reaction is [Wnt protein]-O-(9Z)-hexadecenoyl-L-serine + H2O = [Wnt protein]-L-serine + (9Z)-hexadecenoate + H(+). In terms of biological role, carboxylesterase that acts as a key negative regulator of the Wnt signaling pathway by specifically mediating depalmitoleoylation of WNT proteins. Serine palmitoleoylation of WNT proteins is required for efficient binding to frizzled receptors. Functions in the prospective ectoderm and is required for neural induction. This chain is Palmitoleoyl-protein carboxylesterase notum1', found in Xenopus laevis (African clawed frog).